Reading from the N-terminus, the 692-residue chain is Elongation factor G (692 aa).

The tr-type G domain maps to 8-282 (ENTRNIGIMA…AVIDYLPSPV (275 aa)). Residues 17–24 (AHIDAGKT), 81–85 (DTPGH), and 135–138 (NKMD) each bind GTP.

It belongs to the TRAFAC class translation factor GTPase superfamily. Classic translation factor GTPase family. EF-G/EF-2 subfamily.

Its subcellular location is the cytoplasm. Catalyzes the GTP-dependent ribosomal translocation step during translation elongation. During this step, the ribosome changes from the pre-translocational (PRE) to the post-translocational (POST) state as the newly formed A-site-bound peptidyl-tRNA and P-site-bound deacylated tRNA move to the P and E sites, respectively. Catalyzes the coordinated movement of the two tRNA molecules, the mRNA and conformational changes in the ribosome. This chain is Elongation factor G, found in Lysinibacillus sphaericus (strain C3-41).